The sequence spans 1264 residues: Valine--tRNA ligase (1264 aa).

Residue serine 2 is modified to N-acetylserine. A GST C-terminal domain is found at 89–219 (GSRAAVLVQQ…YSGARSVTQQ (131 aa)). A compositionally biased stretch (polar residues) spans 218 to 230 (QQPGSEITAPQKT). Residues 218-296 (QQPGSEITAP…GEKKDVSGTM (79 aa)) are disordered. Composition is skewed to basic and acidic residues over residues 234–248 (LKKE…EKFQ) and 260–275 (HGEK…KRDP). The short motif at 344–354 (PNVTGSLHLGH) is the 'HIGH' region element. 2 positions are modified to phosphoserine: serine 437 and serine 527. Lysine 645 carries the post-translational modification N6-acetyllysine. Residues 862-866 (KMSKS) carry the 'KMSKS' region motif. Position 865 (lysine 865) interacts with ATP.

The protein belongs to the class-I aminoacyl-tRNA synthetase family. Forms high-molecular-mass aggregates with elongation factor 1.

It carries out the reaction tRNA(Val) + L-valine + ATP = L-valyl-tRNA(Val) + AMP + diphosphate. With respect to regulation, can be regulated by protein kinase C-dependent phosphorylation. The protein is Valine--tRNA ligase (Vars1) of Rattus norvegicus (Rat).